A 149-amino-acid polypeptide reads, in one-letter code: 3-dehydroquinate dehydratase (149 aa).

Tyr-26 serves as the catalytic Proton acceptor. Residues Asn-77, His-83, and Asp-90 each coordinate substrate. The active-site Proton donor is His-103. Substrate-binding positions include 104 to 105 (LS) and Arg-114.

Belongs to the type-II 3-dehydroquinase family. As to quaternary structure, homododecamer.

The catalysed reaction is 3-dehydroquinate = 3-dehydroshikimate + H2O. The protein operates within metabolic intermediate biosynthesis; chorismate biosynthesis; chorismate from D-erythrose 4-phosphate and phosphoenolpyruvate: step 3/7. Catalyzes a trans-dehydration via an enolate intermediate. This chain is 3-dehydroquinate dehydratase, found in Aeromonas salmonicida (strain A449).